We begin with the raw amino-acid sequence, 75 residues long: Small ribosomal subunit protein bS16 (75 aa).

The protein belongs to the bacterial ribosomal protein bS16 family.

The sequence is that of Small ribosomal subunit protein bS16 from Campylobacter jejuni subsp. jejuni serotype O:23/36 (strain 81-176).